The following is a 360-amino-acid chain: Popeye domain-containing protein 1 (360 aa).

The Extracellular segment spans residues 1-48 (MNYTESSPLRESTAIGFTPELESIIPVPSNKTTCENWREIHHLVFHVA). N-linked (GlcNAc...) asparagine glycans are attached at residues asparagine 2 and asparagine 30. Residues 49–69 (NICFAVGLVIPTTLHLHMIFL) traverse the membrane as a helical segment. Arginine 70 is a topological domain (cytoplasmic). The helical transmembrane segment at 71–91 (GMLTLGCTLYIVWATLYRCAL) threads the bilayer. A topological domain (extracellular) is located at residue aspartate 92. The chain crosses the membrane as a helical span at residues 93-113 (IMIWNSVFLGVNILHLSYLLY). The segment at 93-115 (IMIWNSVFLGVNILHLSYLLYKK) is required for interaction with CAV3. Residues 114–360 (KKRPVKIEKE…PNTLKVHQLP (247 aa)) are Cytoplasmic-facing. The segment at 136-186 (RVPPDLFRRLTGQFCMIQTLKKGQTYAAEDKTSVDDRLSILLKGKMKVSYR) is required for interaction with KCNK2. Phosphoserine occurs at positions 295 and 318. The tract at residues 317–360 (SSLHVSSPHQRASAKMKPIEEGAEDDDDVFEPASPNTLKVHQLP) is disordered. The span at 337–346 (EGAEDDDDVF) shows a compositional bias: acidic residues. The segment covering 350 to 360 (SPNTLKVHQLP) has biased composition (polar residues).

The protein belongs to the popeye family. As to quaternary structure, homodimer. Homodimerization requires the C-terminus cytoplasmic region. Interacts (via the C-terminus cytoplasmic tail) with TJP1. Interacts (via the C-terminus cytoplasmic tail) with ARHGEF25/GEFT (via the DH domain). Interacts (via the C-terminus cytoplasmic tail) with VAMP3. Interacts with KCNK2; the interaction enhances KCNK2 surface expression and is inhibited by cAMP. Interacts with CAV3. Expressed in epithelial cells (at protein level). Expressed in fetal and adult heart and skeletal muscle.

The protein resides in the lateral cell membrane. It localises to the cell junction. It is found in the tight junction. Its subcellular location is the membrane. The protein localises to the cell membrane. The protein resides in the sarcolemma. It localises to the caveola. In terms of biological role, cell adhesion molecule involved in the establishment and/or maintenance of cell integrity. Involved in the formation and regulation of the tight junction (TJ) paracellular permeability barrier in epithelial cells. Plays a role in VAMP3-mediated vesicular transport and recycling of different receptor molecules through its interaction with VAMP3. Plays a role in the regulation of cell shape and movement by modulating the Rho-family GTPase activity through its interaction with ARHGEF25/GEFT. Induces primordial adhesive contact and aggregation of epithelial cells in a Ca(2+)-independent manner. Also involved in striated muscle regeneration and repair and in the regulation of cell spreading. Important for the maintenance of cardiac function. Plays a regulatory function in heart rate dynamics mediated, at least in part, through cAMP-binding and, probably, by increasing cell surface expression of the potassium channel KCNK2 and enhancing current density. Is also a caveolae-associated protein important for the preservation of caveolae structural and functional integrity as well as for heart protection against ischemia injury. This is Popeye domain-containing protein 1 from Homo sapiens (Human).